Reading from the N-terminus, the 236-residue chain is 2-C-methyl-D-erythritol 4-phosphate cytidylyltransferase (236 aa).

Belongs to the IspD/TarI cytidylyltransferase family. IspD subfamily. Homodimer.

The enzyme catalyses 2-C-methyl-D-erythritol 4-phosphate + CTP + H(+) = 4-CDP-2-C-methyl-D-erythritol + diphosphate. It participates in isoprenoid biosynthesis; isopentenyl diphosphate biosynthesis via DXP pathway; isopentenyl diphosphate from 1-deoxy-D-xylulose 5-phosphate: step 2/6. Functionally, catalyzes the formation of 4-diphosphocytidyl-2-C-methyl-D-erythritol from CTP and 2-C-methyl-D-erythritol 4-phosphate (MEP). The chain is 2-C-methyl-D-erythritol 4-phosphate cytidylyltransferase from Cronobacter sakazakii (strain ATCC BAA-894) (Enterobacter sakazakii).